The primary structure comprises 1382 residues: Hepatocyte growth factor receptor (1382 aa).

The signal sequence occupies residues 1 to 24; the sequence is MKASAVLAPGILVILFTLVQKSNC. Residues 25–933 lie on the Extracellular side of the membrane; that stretch reads ECKEALVKSK…VIVQPDQNIT (909 aa). A Sema domain is found at 27 to 516; it reads KEALVKSKMN…TGKKITKIPL (490 aa). Residue Asn45 is glycosylated (N-linked (GlcNAc...) asparagine). 4 disulfides stabilise this stretch: Cys95-Cys101, Cys98-Cys160, Cys133-Cys141, and Cys173-Cys176. N-linked (GlcNAc...) asparagine glycosylation occurs at Asn106. N-linked (GlcNAc...) asparagine glycans are attached at residues Asn203 and Asn359. Disulfide bonds link Cys299-Cys364 and Cys386-Cys398. N-linked (GlcNAc...) asparagine glycosylation is found at Asn400 and Asn406. Cystine bridges form between Cys521-Cys539, Cys527-Cys562, Cys530-Cys546, and Cys542-Cys552. IPT/TIG domains lie at 564 to 656, 658 to 740, and 743 to 837; these read PTIY…FSYV, PIIT…FSYQ, and PIIY…LIYV. Thr583 carries O-linked (Man) threonine glycosylation. Asn608 and Asn636 each carry an N-linked (GlcNAc...) asparagine glycan. Thr677 and Thr762 each carry an O-linked (Man) threonine glycan. N-linked (GlcNAc...) asparagine glycosylation is found at Asn786, Asn880, and Asn931. Residues 934 to 956 traverse the membrane as a helical segment; the sequence is EFIVGILSISGILLTLLGLLLWW. Residues 957-1382 are Cytoplasmic-facing; that stretch reads KKKKQIKDLG…QDNFDSEGNT (426 aa). Ser967 bears the Phosphoserine mark. Residue Thr978 is modified to Phosphothreonine. Phosphoserine is present on residues Ser991, Ser998, and Ser1001. Tyr1004 carries the phosphotyrosine modification. The region spanning 1079–1346 is the Protein kinase domain; that stretch reads VHFNEVIGRG…RISAIFSTFI (268 aa). ATP is bound by residues 1085-1093 and Lys1111; that span reads IGRGHFGCV. The Proton acceptor role is filled by Asp1205. An interaction with RANBP9 region spans residues 1213-1382; that stretch reads LDENFTVKVA…QDNFDSEGNT (170 aa). Tyr1231 is subject to Phosphotyrosine. Phosphotyrosine; by autocatalysis occurs at positions 1235 and 1236. The residue at position 1290 (Thr1290) is a Phosphothreonine. The segment at 1321–1360 is interaction with MUC20; that stretch reads WHPKAELRPSFSELVSRISAIFSTFIGEHYVHVNATYVNI. A phosphotyrosine; by autocatalysis mark is found at Tyr1350 and Tyr1357. Phosphotyrosine is present on Tyr1366.

This sequence belongs to the protein kinase superfamily. Tyr protein kinase family. Heterodimer made of an alpha chain (50 kDa) and a beta chain (145 kDa) which are disulfide linked. Binds PLXNB1. Interacts when phosphorylated with downstream effectors including STAT3, PIK3R1, SRC, PCLG1, GRB2 and GAB1. Interacts with SPSB1, SPSB2 and SPSB4. Interacts with INPP5D/SHIP1. When phosphorylated at Tyr-1357, interacts with INPPL1/SHIP2. Interacts with RANBP9 and RANBP10, as well as SPSB1, SPSB2, SPSB3 and SPSB4. SPSB1 binding occurs in the presence and in the absence of HGF, however HGF treatment has a positive effect on this interaction. Interacts with MUC20; prevents interaction with GRB2 and suppresses hepatocyte growth factor-induced cell proliferation. Interacts with GRB10. Interacts with PTPN1 and PTPN2. Interacts with tensin TNS3. Interacts (when phosphorylated) with tensin TNS4 (via SH2 domain); the interaction increases MET protein stability by inhibiting MET endocytosis and subsequent lysosomal degradation. In terms of processing, autophosphorylated in response to ligand binding on Tyr-1235 and Tyr-1236 in the kinase domain leading to further phosphorylation of Tyr-1350 and Tyr-1357 in the C-terminal multifunctional docking site. Dephosphorylated by PTPRJ at Tyr-1350 and Tyr-1366. Dephosphorylated by PTPN1 and PTPN2. Post-translationally, ubiquitinated. Ubiquitination by CBL regulates the receptor stability and activity through proteasomal degradation. O-mannosylation of IPT/TIG domains by TMEM260 is required for protein maturation. O-mannosylated residues are composed of single mannose glycans that are not elongated or modified.

It localises to the membrane. It carries out the reaction L-tyrosyl-[protein] + ATP = O-phospho-L-tyrosyl-[protein] + ADP + H(+). With respect to regulation, in its inactive state, the C-terminal tail interacts with the catalytic domain and inhibits the kinase activity. Upon ligand binding, the C-terminal tail is displaced and becomes phosphorylated, thus increasing the kinase activity. Its function is as follows. Receptor tyrosine kinase that transduces signals from the extracellular matrix into the cytoplasm by binding to hepatocyte growth factor/HGF ligand. Regulates many physiological processes including proliferation, scattering, morphogenesis and survival. Ligand binding at the cell surface induces autophosphorylation of MET on its intracellular domain that provides docking sites for downstream signaling molecules. Following activation by ligand, interacts with the PI3-kinase subunit PIK3R1, PLCG1, SRC, GRB2, STAT3 or the adapter GAB1. Recruitment of these downstream effectors by MET leads to the activation of several signaling cascades including the RAS-ERK, PI3 kinase-AKT, or PLCgamma-PKC. The RAS-ERK activation is associated with the morphogenetic effects while PI3K/AKT coordinates prosurvival effects. During embryonic development, MET signaling plays a role in gastrulation, development and migration of muscles and neuronal precursors, angiogenesis and kidney formation. In adults, participates in wound healing as well as organ regeneration and tissue remodeling. Also promotes differentiation and proliferation of hematopoietic cells. In Atelerix albiventris (Middle-African hedgehog), this protein is Hepatocyte growth factor receptor (MET).